A 344-amino-acid chain; its full sequence is Dihydroorotase (344 aa).

The Zn(2+) site is built by H13 and H15. Residues 15 to 17 (HLR) and N41 each bind substrate. The Zn(2+) site is built by K99, H136, and H174. The residue at position 99 (K99) is an N6-carboxylysine. H136 provides a ligand contact to substrate. Residue L219 coordinates substrate. D247 contacts Zn(2+). Residue D247 is part of the active site. Positions 251 and 263 each coordinate substrate.

It belongs to the metallo-dependent hydrolases superfamily. DHOase family. Class II DHOase subfamily. As to quaternary structure, homodimer. Zn(2+) serves as cofactor.

It catalyses the reaction (S)-dihydroorotate + H2O = N-carbamoyl-L-aspartate + H(+). The protein operates within pyrimidine metabolism; UMP biosynthesis via de novo pathway; (S)-dihydroorotate from bicarbonate: step 3/3. In terms of biological role, catalyzes the reversible cyclization of carbamoyl aspartate to dihydroorotate. The sequence is that of Dihydroorotase from Idiomarina loihiensis (strain ATCC BAA-735 / DSM 15497 / L2-TR).